We begin with the raw amino-acid sequence, 238 residues long: Ribosomal RNA small subunit methyltransferase G (238 aa).

S-adenosyl-L-methionine is bound by residues glycine 78, phenylalanine 83, 129–130 (AE), and arginine 148. The segment at 217–238 (KKKETPKKYPRKAGTPAKSPIK) is disordered.

This sequence belongs to the methyltransferase superfamily. RNA methyltransferase RsmG family.

It is found in the cytoplasm. In terms of biological role, specifically methylates the N7 position of a guanine in 16S rRNA. This chain is Ribosomal RNA small subunit methyltransferase G, found in Lactococcus lactis subsp. cremoris (strain SK11).